We begin with the raw amino-acid sequence, 514 residues long: L-Threonine dehydratase biosynthetic IlvA (514 aa).

Residue K62 is modified to N6-(pyridoxal phosphate)lysine. Residues N89, 188 to 192, and S315 contribute to the pyridoxal 5'-phosphate site; that span reads GGGGL. ACT-like domains follow at residues 339–411 and 434–504; these read ALLA…DLSD and RLYS…DESN.

This sequence belongs to the serine/threonine dehydratase family. In terms of assembly, homotetramer. Pyridoxal 5'-phosphate serves as cofactor.

It carries out the reaction L-threonine = 2-oxobutanoate + NH4(+). The protein operates within amino-acid biosynthesis; L-isoleucine biosynthesis; 2-oxobutanoate from L-threonine: step 1/1. Its activity is regulated as follows. Isoleucine allosterically inhibits whereas valine allosterically activates this enzyme. Its function is as follows. Catalyzes the anaerobic formation of alpha-ketobutyrate and ammonia from threonine in a two-step reaction. The first step involved a dehydration of threonine and a production of enamine intermediates (aminocrotonate), which tautomerizes to its imine form (iminobutyrate). Both intermediates are unstable and short-lived. The second step is the nonenzymatic hydrolysis of the enamine/imine intermediates to form 2-ketobutyrate and free ammonia. In the low water environment of the cell, the second step is accelerated by RidA. This Salmonella typhimurium (strain LT2 / SGSC1412 / ATCC 700720) protein is L-Threonine dehydratase biosynthetic IlvA (ilvA).